Reading from the N-terminus, the 361-residue chain is Phospho-N-acetylmuramoyl-pentapeptide-transferase (361 aa).

The next 10 helical transmembrane spans lie at 28 to 48 (LAIIITLSLSFIMGPILIKFL), 74 to 94 (TMGGIMIILSSGLSTLLLADL), 99 to 119 (IWITLFGFISFGIIGFMDDYA), 133 to 153 (SKLVLQGIISLIICVLLEYLD), 168 to 188 (LNLDLGYFYIVFAIFVIVGSS), 203 to 223 (VPIAFTAGSFALISYLVGNLI), 236 to 256 (TGELTVLCAGLVGSCLGFLWF), 263 to 283 (VFMGDTGSLSLGGVLGIISVI), 288 to 308 (IVLAIVGGLFVIETASVILQV), and 338 to 358 (KVVIRFWIISVIFALIGLSSL).

This sequence belongs to the glycosyltransferase 4 family. MraY subfamily. The cofactor is Mg(2+).

It is found in the cell inner membrane. It catalyses the reaction UDP-N-acetyl-alpha-D-muramoyl-L-alanyl-gamma-D-glutamyl-meso-2,6-diaminopimeloyl-D-alanyl-D-alanine + di-trans,octa-cis-undecaprenyl phosphate = di-trans,octa-cis-undecaprenyl diphospho-N-acetyl-alpha-D-muramoyl-L-alanyl-D-glutamyl-meso-2,6-diaminopimeloyl-D-alanyl-D-alanine + UMP. The protein operates within cell wall biogenesis; peptidoglycan biosynthesis. Its function is as follows. Catalyzes the initial step of the lipid cycle reactions in the biosynthesis of the cell wall peptidoglycan: transfers peptidoglycan precursor phospho-MurNAc-pentapeptide from UDP-MurNAc-pentapeptide onto the lipid carrier undecaprenyl phosphate, yielding undecaprenyl-pyrophosphoryl-MurNAc-pentapeptide, known as lipid I. This Rickettsia akari (strain Hartford) protein is Phospho-N-acetylmuramoyl-pentapeptide-transferase.